A 318-amino-acid polypeptide reads, in one-letter code: C1GALT1-specific chaperone 1 (318 aa).

At 1-6 the chain is on the cytoplasmic side; that stretch reads MLSESS. A helical; Signal-anchor for type II membrane protein transmembrane segment spans residues 7–26; sequence SFLKGVMLGSIFCALITMLG. The Lumenal segment spans residues 27 to 318; it reads HIRIGHGSRM…FLPPNGSDND (292 aa).

Belongs to the glycosyltransferase 31 family. Beta3-Gal-T subfamily. Associates with core 1 beta-3-galactosyltransferase (C1GALT1), probably not with the soluble active form.

The protein resides in the membrane. Functionally, probable chaperone required for the generation of 1 O-glycan Gal-beta1-3GalNAc-alpha1-Ser/Thr (T antigen), which is a precursor for many extended O-glycans in glycoproteins. Probably acts as a specific molecular chaperone assisting the folding/stability of core 1 beta-3-galactosyltransferase (C1GALT1). This Bos taurus (Bovine) protein is C1GALT1-specific chaperone 1 (C1GALT1C1).